The following is a 424-amino-acid chain: Trigger factor (424 aa).

In terms of domain architecture, PPIase FKBP-type spans 163 to 248 (GNTVVLDFEG…IHEIKAKELP (86 aa)).

It belongs to the FKBP-type PPIase family. Tig subfamily.

The protein localises to the cytoplasm. The catalysed reaction is [protein]-peptidylproline (omega=180) = [protein]-peptidylproline (omega=0). Involved in protein export. Acts as a chaperone by maintaining the newly synthesized protein in an open conformation. Functions as a peptidyl-prolyl cis-trans isomerase. This Bacillus subtilis (strain 168) protein is Trigger factor (tig).